A 378-amino-acid chain; its full sequence is Acetylornithine deacetylase (378 aa).

Zn(2+) is bound at residue H76. D78 is a catalytic residue. Residue D108 coordinates Zn(2+). E140 is a catalytic residue. Zn(2+) contacts are provided by E141, E165, and H351.

Belongs to the peptidase M20A family. ArgE subfamily. In terms of assembly, homodimer. Zn(2+) serves as cofactor. Requires Co(2+) as cofactor. It depends on glutathione as a cofactor.

It localises to the cytoplasm. It catalyses the reaction N(2)-acetyl-L-ornithine + H2O = L-ornithine + acetate. It participates in amino-acid biosynthesis; L-arginine biosynthesis; L-ornithine from N(2)-acetyl-L-ornithine (linear): step 1/1. Catalyzes the hydrolysis of the amide bond of N(2)-acetylated L-amino acids. Cleaves the acetyl group from N-acetyl-L-ornithine to form L-ornithine, an intermediate in L-arginine biosynthesis pathway, and a branchpoint in the synthesis of polyamines. This chain is Acetylornithine deacetylase, found in Vibrio parahaemolyticus serotype O3:K6 (strain RIMD 2210633).